A 151-amino-acid polypeptide reads, in one-letter code: UPF0178 protein RD1_0321 (151 aa).

It belongs to the UPF0178 family.

This Roseobacter denitrificans (strain ATCC 33942 / OCh 114) (Erythrobacter sp. (strain OCh 114)) protein is UPF0178 protein RD1_0321.